We begin with the raw amino-acid sequence, 199 residues long: Recombination protein RecR (199 aa).

The C4-type zinc-finger motif lies at 56–71 (CQRCNTFTEGDICERC). Positions 79 to 174 (ELLCVVETPV…GVTRIARGVP (96 aa)) constitute a Toprim domain.

Belongs to the RecR family.

In terms of biological role, may play a role in DNA repair. It seems to be involved in an RecBC-independent recombinational process of DNA repair. It may act with RecF and RecO. The chain is Recombination protein RecR from Dechloromonas aromatica (strain RCB).